The primary structure comprises 136 residues: Small ribosomal subunit protein uS19 (136 aa).

Belongs to the universal ribosomal protein uS19 family.

Its function is as follows. Protein S19 forms a complex with S13 that binds strongly to the 16S ribosomal RNA. The chain is Small ribosomal subunit protein uS19 from Methanosphaera stadtmanae (strain ATCC 43021 / DSM 3091 / JCM 11832 / MCB-3).